Reading from the N-terminus, the 309-residue chain is WD repeat domain phosphoinositide-interacting protein 4 (309 aa).

The WD 1 repeat unit spans residues glutamine 4–histidine 42. A L/FRRG motif motif is present at residues leucine 180–glycine 183. A WD 2 repeat occupies threonine 184–arginine 223.

Belongs to the WD repeat PROPPIN family. As to quaternary structure, interacts with WIPI1. Interacts with WIPI2. Interacts with ATG2A and ATG2B. Interacts with ULK1. May interact with the PRKAA1, PRKAA2, PRKAB1 and PRKAG1 subunits of the AMPK kinase. May interact with NUDC.

Its subcellular location is the preautophagosomal structure. The protein localises to the cytoplasm. Functionally, component of the autophagy machinery that controls the major intracellular degradation process by which cytoplasmic materials are packaged into autophagosomes and delivered to lysosomes for degradation. Binds phosphatidylinositol 3-phosphate (PtdIns3P). Activated by the STK11/AMPK signaling pathway upon starvation, WDR45 is involved in autophagosome assembly downstream of WIPI2, regulating the size of forming autophagosomes. Together with WIPI1, promotes ATG2 (ATG2A or ATG2B)-mediated lipid transfer by enhancing ATG2-association with phosphatidylinositol 3-monophosphate (PI3P)-containing membranes. Probably recruited to membranes through its PtdIns3P activity. The protein is WD repeat domain phosphoinositide-interacting protein 4 (Wdr45) of Rattus norvegicus (Rat).